The sequence spans 123 residues: MIATPIRLAKSAYEPMIKFVGTRHPLVKHATEVVVHPCATNGMLPGSKECIPVSKFMENYKPFRVVPIKHSANAGLSSSKTSVFVNRPLQKDELASIFELPARFRYKPINEHELESINSGGAW.

A mitochondrion-targeting transit peptide spans 1–8 (MIATPIRL).

The protein belongs to the alpha-ketoglutarate dehydrogenase component 4 family. In terms of assembly, component of the 2-oxoglutarate dehydrogenase complex (OGDC), also called alpha-ketoglutarate dehydrogenase (KGDH) complex. The copmplex is composed of the catalytic subunits OGDH (2-oxoglutarate dehydrogenase KGD1; also called E1 subunit), DLST (dihydrolipoamide succinyltransferase KGD2; also called E2 subunit) and DLD (dihydrolipoamide dehydrogenase LPD1; also called E3 subunit), and the assembly factor KGD4. Within OGDC, interacts (via N-terminus) with E3 subunit and (via C-terminus) with the complex core formed by E1 and E2 subunits.

The protein resides in the mitochondrion. In terms of biological role, molecular adapter that is necessary to a form a stable 2-oxoglutarate dehydrogenase enzyme complex (OGDC). Required for incorporation of the E3 subunit (LPD1) into the E1-E2 core (KGD1-KGD2) of mitochondrial OGDC, and acting as a stability factor for the fully assembled complex. This Saccharomyces cerevisiae (strain ATCC 204508 / S288c) (Baker's yeast) protein is Alpha-ketoglutarate dehydrogenase subunit 4, mitochondrial.